Consider the following 184-residue polypeptide: Elongation factor P (184 aa).

This sequence belongs to the elongation factor P family.

It is found in the cytoplasm. Its pathway is protein biosynthesis; polypeptide chain elongation. Functionally, involved in peptide bond synthesis. Stimulates efficient translation and peptide-bond synthesis on native or reconstituted 70S ribosomes in vitro. Probably functions indirectly by altering the affinity of the ribosome for aminoacyl-tRNA, thus increasing their reactivity as acceptors for peptidyl transferase. In Albidiferax ferrireducens (strain ATCC BAA-621 / DSM 15236 / T118) (Rhodoferax ferrireducens), this protein is Elongation factor P.